Here is a 274-residue protein sequence, read N- to C-terminus: Large ribosomal subunit protein uL2cz/uL2cy (274 aa).

The disordered stretch occupies residues 225 to 274; the sequence is PVDHPHGGGEGRAPIGRKKPVTPWGYPALGRRTRKRKKYSETLILRRRSK.

It belongs to the universal ribosomal protein uL2 family. As to quaternary structure, part of the 50S ribosomal subunit.

The protein localises to the plastid. Its subcellular location is the chloroplast. This Crucihimalaya wallichii (Rock-cress) protein is Large ribosomal subunit protein uL2cz/uL2cy (rpl2-A).